The sequence spans 451 residues: Phosphoglucosamine mutase (451 aa).

The active-site Phosphoserine intermediate is the Ser102. 4 residues coordinate Mg(2+): Ser102, Asp242, Asp244, and Asp246. Ser102 carries the post-translational modification Phosphoserine.

The protein belongs to the phosphohexose mutase family. Mg(2+) serves as cofactor. In terms of processing, activated by phosphorylation.

The catalysed reaction is alpha-D-glucosamine 1-phosphate = D-glucosamine 6-phosphate. Functionally, catalyzes the conversion of glucosamine-6-phosphate to glucosamine-1-phosphate. The sequence is that of Phosphoglucosamine mutase from Staphylococcus aureus (strain USA300).